Here is a 369-residue protein sequence, read N- to C-terminus: Glycolate oxidase 5 (369 aa).

An FMN hydroxy acid dehydrogenase domain is found at 1 to 360 (MGEITNVTEY…TRNHVITEAD (360 aa)). A glyoxylate-binding site is contributed by tyrosine 25. Residues 78 to 80 (PSA), serine 107, 128 to 130 (QLY), and threonine 156 contribute to the FMN site. Glyoxylate is bound at residue tyrosine 130. Arginine 165 serves as a coordination point for glyoxylate. 2 residues coordinate FMN: lysine 231 and serine 253. Glyoxylate contacts are provided by histidine 255 and arginine 258. Histidine 255 serves as the catalytic Proton acceptor. FMN-binding positions include 286 to 290 (DGGVR) and 309 to 310 (GR). The short motif at 367 to 369 (SRL) is the Microbody targeting signal element.

It belongs to the FMN-dependent alpha-hydroxy acid dehydrogenase family. In terms of assembly, homotetramer. FMN is required as a cofactor.

Its subcellular location is the peroxisome. It catalyses the reaction glycolate + O2 = glyoxylate + H2O2. The protein operates within photosynthesis; photorespiration; glycine from 2-phosphoglycolate: step 2/3. Its function is as follows. Catalyzes the oxidation of glycolate to glyoxylate, with a reduction of O2 to H2O2. Is a key enzyme in photorespiration in green plants. In Oryza sativa subsp. japonica (Rice), this protein is Glycolate oxidase 5 (GLO5).